The sequence spans 148 residues: uncharacterized protein (148 aa).

CBS domains follow at residues 8 to 68 and 74 to 130; these read MTAD…PNSQ and MTEK…ERAG. Residues 127-148 form a disordered region; the sequence is ERAGSALSDISEGDNREEGFFH. Over residues 139-148 the composition is skewed to basic and acidic residues; the sequence is GDNREEGFFH.

This is an uncharacterized protein from Bacillus subtilis (strain 168).